The chain runs to 173 residues: Shikimate kinase 1 (173 aa).

14-19 (GAGKST) lines the ATP pocket. S18 contributes to the Mg(2+) binding site. D36, R60, and G82 together coordinate substrate. An ATP-binding site is contributed by R120. Position 140 (R140) interacts with substrate. Q157 is an ATP binding site.

It belongs to the shikimate kinase family. In terms of assembly, monomer. The cofactor is Mg(2+).

It localises to the cytoplasm. The enzyme catalyses shikimate + ATP = 3-phosphoshikimate + ADP + H(+). It participates in metabolic intermediate biosynthesis; chorismate biosynthesis; chorismate from D-erythrose 4-phosphate and phosphoenolpyruvate: step 5/7. Its function is as follows. Catalyzes the specific phosphorylation of the 3-hydroxyl group of shikimic acid using ATP as a cosubstrate. This chain is Shikimate kinase 1, found in Pectobacterium atrosepticum (strain SCRI 1043 / ATCC BAA-672) (Erwinia carotovora subsp. atroseptica).